The sequence spans 409 residues: Arginine deiminase (409 aa).

Catalysis depends on C399, which acts as the Amidino-cysteine intermediate.

It belongs to the arginine deiminase family.

The protein resides in the cytoplasm. The catalysed reaction is L-arginine + H2O = L-citrulline + NH4(+). It participates in amino-acid degradation; L-arginine degradation via ADI pathway; carbamoyl phosphate from L-arginine: step 1/2. In Streptococcus pneumoniae serotype 19F (strain G54), this protein is Arginine deiminase.